The primary structure comprises 517 residues: Heat shock 70-related protein 5 (517 aa).

It belongs to the heat shock protein 70 family.

May function in protein folding and assembly, and disassembly of protein complexes. The polypeptide is Heat shock 70-related protein 5 (Dictyostelium discoideum (Social amoeba)).